We begin with the raw amino-acid sequence, 496 residues long: Lysine--tRNA ligase (496 aa).

Mg(2+) is bound by residues glutamate 409 and glutamate 416.

This sequence belongs to the class-II aminoacyl-tRNA synthetase family. Homodimer. It depends on Mg(2+) as a cofactor.

The protein localises to the cytoplasm. The enzyme catalyses tRNA(Lys) + L-lysine + ATP = L-lysyl-tRNA(Lys) + AMP + diphosphate. The protein is Lysine--tRNA ligase of Streptococcus gordonii (strain Challis / ATCC 35105 / BCRC 15272 / CH1 / DL1 / V288).